A 139-amino-acid chain; its full sequence is D-ribose pyranase (139 aa).

The active-site Proton donor is H20. Residues D28, H106, and 128–130 (YAN) each bind substrate.

It belongs to the RbsD / FucU family. RbsD subfamily. In terms of assembly, homodecamer.

It is found in the cytoplasm. It carries out the reaction beta-D-ribopyranose = beta-D-ribofuranose. The protein operates within carbohydrate metabolism; D-ribose degradation; D-ribose 5-phosphate from beta-D-ribopyranose: step 1/2. In terms of biological role, catalyzes the interconversion of beta-pyran and beta-furan forms of D-ribose. The protein is D-ribose pyranase of Aeromonas salmonicida (strain A449).